We begin with the raw amino-acid sequence, 265 residues long: Phosphate import ATP-binding protein PstB (265 aa).

The 243-residue stretch at 18–260 (IAAKGVNVYY…PEDPRTESYI (243 aa)) folds into the ABC transporter domain. 50 to 57 (GPSGCGKS) is a binding site for ATP.

This sequence belongs to the ABC transporter superfamily. Phosphate importer (TC 3.A.1.7) family. The complex is composed of two ATP-binding proteins (PstB), two transmembrane proteins (PstC and PstA) and a solute-binding protein (PstS).

It localises to the cell inner membrane. The catalysed reaction is phosphate(out) + ATP + H2O = ADP + 2 phosphate(in) + H(+). Its function is as follows. Part of the ABC transporter complex PstSACB involved in phosphate import. Responsible for energy coupling to the transport system. The chain is Phosphate import ATP-binding protein PstB from Ruegeria sp. (strain TM1040) (Silicibacter sp.).